The following is a 479-amino-acid chain: MARLNESTASSEPIEILKRRFVRQNREIARVNSIQSLRIRSLESEVSNLLSENVSLREQIITLTQELERFEAARTLHDGVYDVKARLDSKLVELGNLITELGSLPRRYSRAVRENGEPAPARQSRESGPKEVDDTDPEPNLGFLDGRLPVIMEDKLYPRRTLTAQEVQELRDSDTDGPNCSGFEDSSISPKQRVEYDEAATGGPAYFIDTNTIVEEIENEHSLPPNLETRRKKKIGPATVNKDQADTRPISLLDSKFTRKCGAKRKFSAEDDESLFESSPSEDDEFQFSRPAQSPKLFSQNEHASADDGSGELRRPIQSPTLSSQNDHSPVKMKPQSERSIAHVHGERRVLEPKSTNTNILSPAKPSIMKDYNQNHDFGYNEKSEKPLPRQGKGAVDGSKNASPKKSSTRTPVFGNDGNKSGNKQKKSGAIKSNTPSLDGIEDSEIATTADMPSTRPSRRRGTVSQPESHKTEGISMPP.

Residues 36–76 adopt a coiled-coil conformation; it reads SLRIRSLESEVSNLLSENVSLREQIITLTQELERFEAARTL. 3 disordered regions span residues 109–145, 220–247, and 263–479; these read SRAV…GFLD, EHSL…QADT, and AKRK…SMPP. Residues 123–132 are compositionally biased toward basic and acidic residues; the sequence is QSRESGPKEV. Over residues 270–286 the composition is skewed to acidic residues; the sequence is EDDESLFESSPSEDDEF. Composition is skewed to polar residues over residues 290–303 and 318–328; these read RPAQ…QNEH and QSPTLSSQNDH. Basic and acidic residues-rich tracts occupy residues 335–352 and 379–388; these read PQSE…RVLE and GYNEKSEKPL. A compositionally biased stretch (polar residues) spans 400-411; the sequence is KNASPKKSSTRT.

Belongs to the shugoshin family.

It localises to the nucleus. Its subcellular location is the chromosome. It is found in the centromere. Its function is as follows. Plays a central role in chromosome cohesion during cell division by preventing premature dissociation of cohesin complex from centromeres after prophase, when most of cohesin complex dissociates from chromosomes arms. The chain is Shugoshin (sgo1) from Emericella nidulans (strain FGSC A4 / ATCC 38163 / CBS 112.46 / NRRL 194 / M139) (Aspergillus nidulans).